Reading from the N-terminus, the 224-residue chain is 2-C-methyl-D-erythritol 4-phosphate cytidylyltransferase (224 aa).

This sequence belongs to the IspD/TarI cytidylyltransferase family. IspD subfamily.

It catalyses the reaction 2-C-methyl-D-erythritol 4-phosphate + CTP + H(+) = 4-CDP-2-C-methyl-D-erythritol + diphosphate. It participates in isoprenoid biosynthesis; isopentenyl diphosphate biosynthesis via DXP pathway; isopentenyl diphosphate from 1-deoxy-D-xylulose 5-phosphate: step 2/6. Functionally, catalyzes the formation of 4-diphosphocytidyl-2-C-methyl-D-erythritol from CTP and 2-C-methyl-D-erythritol 4-phosphate (MEP). This chain is 2-C-methyl-D-erythritol 4-phosphate cytidylyltransferase, found in Saccharopolyspora erythraea (strain ATCC 11635 / DSM 40517 / JCM 4748 / NBRC 13426 / NCIMB 8594 / NRRL 2338).